A 718-amino-acid polypeptide reads, in one-letter code: Serine/threonine-protein kinase tousled-like 2 (718 aa).

Residues 24-85 are disordered; the sequence is GVSKGPLNSE…KGTPRGHKIS (62 aa). Polar residues predominate over residues 29 to 44; that stretch reads PLNSESSNQSLCSVGS. The segment covering 46–61 has biased composition (basic and acidic residues); it reads SDKEVETPEKKQNDQR. Residues S73, Q94, L99, and S102 each carry the phosphoserine modification. The interval 147–176 is disordered; that stretch reads QQNSPSSTGSGNTEHSCSSQKQISIQHRQT. The tract at residues 193–244 is required for interaction with TLK1 and DYNLL1/LC8; sequence NSDLEKKEGRIDDLLRANCDLRRQIDEQQKMLEKYKERLNRCVTMSKKLLIE. 3 coiled-coil regions span residues 193-244, 285-315, and 349-397; these read NSDL…LLIE, AFQNLIKQQERINSQREEIERQRKMLAKRKP, and HEQE…DNSQ. The interval 310–337 is disordered; it reads LAKRKPPAMGQAPPATNEQKQRKSKTNG. Positions 408–687 constitute a Protein kinase domain; sequence YLLLHLLGRG…VQQLACDPYL (280 aa). ATP contacts are provided by residues 414 to 422 and K437; that span reads LGRGGFSEV. D538 functions as the Proton acceptor in the catalytic mechanism. Position 696 is a phosphoserine; by CHEK1 (S696).

This sequence belongs to the protein kinase superfamily. Ser/Thr protein kinase family. Monomer. May form homodimers; homodimerization may enhance autophosphoylation and enzymatic activity. Heterodimer with TLK1. Interacts with YWHAZ; association with 14-3-3 proteins such as YWHAZ regulates subcellular location. May also interact with FEZ1/LZTS1 and FEZ2. Interacts with CHD7 and CHD8. Interacts with DYNLL1/LC8. Requires Mg(2+) as cofactor. Phosphorylated at Ser-696, probably by CHEK1. In terms of processing, autophosphorylated; phosphorylation promotes the assembly of higher order oligomers and enzymatic activity. Ubiquitously expressed in all tissues examined, with high levels in heart and testis, in particular the pachytene spermatocytes and in round spermatids. Some evidence for the existence of a testis-specific isoform suggesting a role in spermatogenesis.

It localises to the nucleus. It is found in the nucleoplasm. The protein localises to the cytoplasm. Its subcellular location is the perinuclear region. The protein resides in the cytoskeleton. The enzyme catalyses L-seryl-[protein] + ATP = O-phospho-L-seryl-[protein] + ADP + H(+). It catalyses the reaction L-threonyl-[protein] + ATP = O-phospho-L-threonyl-[protein] + ADP + H(+). Its activity is regulated as follows. Cell cycle-regulated, with maximal activity in the S-phase. Rapidly and transiently inhibited by phosphorylation following the generation of DNA double-stranded breaks during S-phase, probably by CHEK1, possibly at Ser-696. This inhibition is cell cycle checkpoint- and ATM-dependent. In terms of biological role, serine/threonine-protein kinase involved in the process of chromatin assembly and probably also DNA replication, transcription, repair, and chromosome segregation. Phosphorylates the chromatin assembly factors ASF1A and ASF1B. Phosphorylation of ASF1A prevents its proteasome-mediated degradation, thereby enhancing chromatin assembly. Negative regulator of amino acid starvation-induced autophagy. Functionally, testis-specific isoforms may play a role in spermatogenesis. Highly expressed in embryos throughout development. The sequence is that of Serine/threonine-protein kinase tousled-like 2 (Tlk2) from Mus musculus (Mouse).